The following is a 119-amino-acid chain: uncharacterized protein (119 aa).

Residues 1–29 are a coiled coil; that stretch reads MKKVGEEEIKQEENEKEKIVKKLNESDVK.

This is an uncharacterized protein from Acidianus sp. F28 (AFV-2).